We begin with the raw amino-acid sequence, 911 residues long: Protein translocase subunit SecA (911 aa).

ATP-binding positions include Gln-87, 105–109, and Asp-512; that span reads GEGKT. Over residues 561-571 the composition is skewed to basic and acidic residues; it reads RHESRRIDNQL. The disordered stretch occupies residues 561–583; it reads RHESRRIDNQLRGRSGRQGDPGS. 4 residues coordinate Zn(2+): Cys-895, Cys-897, Cys-906, and His-907.

It belongs to the SecA family. As to quaternary structure, monomer and homodimer. Part of the essential Sec protein translocation apparatus which comprises SecA, SecYEG and auxiliary proteins SecDF-YajC and YidC. It depends on Zn(2+) as a cofactor.

Its subcellular location is the cell inner membrane. It is found in the cytoplasm. The catalysed reaction is ATP + H2O + cellular proteinSide 1 = ADP + phosphate + cellular proteinSide 2.. Part of the Sec protein translocase complex. Interacts with the SecYEG preprotein conducting channel. Has a central role in coupling the hydrolysis of ATP to the transfer of proteins into and across the cell membrane, serving both as a receptor for the preprotein-SecB complex and as an ATP-driven molecular motor driving the stepwise translocation of polypeptide chains across the membrane. This Pseudomonas putida (strain W619) protein is Protein translocase subunit SecA.